A 499-amino-acid polypeptide reads, in one-letter code: Guanosine-5'-triphosphate,3'-diphosphate pyrophosphatase (499 aa).

Belongs to the GppA/Ppx family. GppA subfamily.

It catalyses the reaction guanosine 3'-diphosphate 5'-triphosphate + H2O = guanosine 3',5'-bis(diphosphate) + phosphate + H(+). It participates in purine metabolism; ppGpp biosynthesis; ppGpp from GTP: step 2/2. Catalyzes the conversion of pppGpp to ppGpp. Guanosine pentaphosphate (pppGpp) is a cytoplasmic signaling molecule which together with ppGpp controls the 'stringent response', an adaptive process that allows bacteria to respond to amino acid starvation, resulting in the coordinated regulation of numerous cellular activities. The polypeptide is Guanosine-5'-triphosphate,3'-diphosphate pyrophosphatase (Klebsiella pneumoniae (strain 342)).